The following is a 679-amino-acid chain: MLFCAGNPWLPAFFLQFVIMKKIDLTEKQRDLLVDVLDAEAGFAEEKLLDIASGAVSPLFLSESDLLSFLQAANALYRAGYPLLSDEAYDFTFLTELRRRNPQHPYLLQVEAEPVQQGKTVELPMRMLSTDKAYDLESIRRWGRRIEKAAQEKGIDFTSLVFRGTPKLDGFAAYDDGRRLYTRGDGKKGTDVSRAFARGLQVSRGGSRGLGAGEIVVNKDYFTEHLAQFFDNSRNFQASLIKEKTLALPVVKAIEAGAAIFFPFSMLPDWRGSWLELLQEFEEIVEGLWQKVPYEIDGVVFEIIDEGLREVMGATRHHHRWQIAFKKNTEIAEVTVLRVRPQTSRLGRVNPVAEVEPTRLSGALIQRVTAHHYAMVRDRGIGPGARIRMSRSGEVIPKIEEVVKPVAAAQLDIPAHCPSCGSDLAWDGDYLFCLNNMSCPAQITNSMEHFFKILGNVDGFGPSSVQRLYEGGLVDLPALYAMESADFEQVGFGPKQATNMVEQLNRSREELIEDWRFLAAFGVHRLGMGNCEKLLRYVRLEDVFNLSEEQIVAEIKGFQEKTAHSICAGLAGIKDLFFQLFALGFKLEPTPLLAEGGQGEKSPISGKTIVFTGAMLAASRGDMEKQAKALGATVGKSITGKTDMLVTGQRVGATKMAKAETLGIAILSEEAYRQLVSLD.

Residues 86-90 (DEAYD) and 129-130 (ST) each bind NAD(+). Lysine 167 acts as the N6-AMP-lysine intermediate in catalysis. Arginine 183, glutamate 214, and lysine 326 together coordinate NAD(+). Cysteine 417, cysteine 420, cysteine 433, and cysteine 439 together coordinate Zn(2+). Positions 599–679 (GEKSPISGKT…EAYRQLVSLD (81 aa)) constitute a BRCT domain.

It belongs to the NAD-dependent DNA ligase family. LigA subfamily. Mg(2+) serves as cofactor. It depends on Mn(2+) as a cofactor.

The enzyme catalyses NAD(+) + (deoxyribonucleotide)n-3'-hydroxyl + 5'-phospho-(deoxyribonucleotide)m = (deoxyribonucleotide)n+m + AMP + beta-nicotinamide D-nucleotide.. Its function is as follows. DNA ligase that catalyzes the formation of phosphodiester linkages between 5'-phosphoryl and 3'-hydroxyl groups in double-stranded DNA using NAD as a coenzyme and as the energy source for the reaction. It is essential for DNA replication and repair of damaged DNA. The polypeptide is DNA ligase (Desulfotalea psychrophila (strain LSv54 / DSM 12343)).